Here is a 281-residue protein sequence, read N- to C-terminus: Bifunctional protein FolD (281 aa).

Residues 161-163 (GRS), S186, and I227 each bind NADP(+).

The protein belongs to the tetrahydrofolate dehydrogenase/cyclohydrolase family. In terms of assembly, homodimer.

The catalysed reaction is (6R)-5,10-methylene-5,6,7,8-tetrahydrofolate + NADP(+) = (6R)-5,10-methenyltetrahydrofolate + NADPH. The enzyme catalyses (6R)-5,10-methenyltetrahydrofolate + H2O = (6R)-10-formyltetrahydrofolate + H(+). The protein operates within one-carbon metabolism; tetrahydrofolate interconversion. In terms of biological role, catalyzes the oxidation of 5,10-methylenetetrahydrofolate to 5,10-methenyltetrahydrofolate and then the hydrolysis of 5,10-methenyltetrahydrofolate to 10-formyltetrahydrofolate. This is Bifunctional protein FolD from Brachyspira hyodysenteriae (strain ATCC 49526 / WA1).